We begin with the raw amino-acid sequence, 192 residues long: Potassium channel HX13_20290 (192 aa).

The helical transmembrane segment at 1–24 (MTKGRLEAFSDGVLAIIITIMVLE) threads the bilayer. Residues 5–11 (RLEAFSD) carry the RxxxFSD motif motif. Leucine 25 is a topological domain (cytoplasmic). Residues 26 to 29 (KVPE) are short helix H1. At 26–39 (KVPEGSSWASLQPI) the chain is on the extracellular side. The segment at 31-37 (SSWASLQ) is short helix H2. Residues 40–65 (LPRFLAYIFSFIYVGIYWNNHHHLFQ) form a helical membrane-spanning segment. The Cytoplasmic portion of the chain corresponds to 66–71 (TVKKVN). A helical membrane pass occupies residues 72–93 (GSILWANLHLLFWLSLMPIATE). Residues 94–101 (WIGTSHFA) are Extracellular-facing. A helical membrane pass occupies residues 102–126 (QNPVATYGIGLIMSAIAYTILENVI). Topologically, residues 127–133 (IRCEGEN) are cytoplasmic. Residues 134–162 (SKLKEAIHSKFKEYISIIFYVLGIATSFF) form a helical membrane-spanning segment. Topologically, residues 163-164 (YP) are extracellular. The helical transmembrane segment at 165–180 (YIAIGFYYLVALIWLI) threads the bilayer. Residues 181 to 192 (PDKRIEKSLKEN) lie on the Cytoplasmic side of the membrane.

Belongs to the TMEM175 family. Homotetramer.

It localises to the membrane. The enzyme catalyses K(+)(in) = K(+)(out). Potassium channel. The polypeptide is Potassium channel HX13_20290 (Chryseobacterium sp. (strain P1-3)).